We begin with the raw amino-acid sequence, 85 residues long: Contulakin-Lt1 (85 aa).

The signal sequence occupies residues 1 to 22; that stretch reads MRTAYWVMVMMMVGITAPLSEG. Residues 23–60 constitute a propeptide that is removed on maturation; that stretch reads RKLNDAIRGLVADYLTPQLLQSLVSAPYPEFQLDDPNL. A disulfide bond links Cys65 and Cys70. Positions 76 to 85 are excised as a propeptide; sequence RRRDLKKRNK.

This sequence belongs to the conotoxin C superfamily. As to expression, expressed by the venom duct.

It is found in the secreted. In terms of biological role, acts as an agonist of neurotensin receptors. It binds to human neurotensin type 1 receptor (NTSR1), rat neurotensin types 1 and 2 receptors (NTSR1/NTSR2) and mouse neurotensin type 3 receptor (SORT1). The chain is Contulakin-Lt1 from Conus litteratus (Lettered cone).